We begin with the raw amino-acid sequence, 523 residues long: Ubiquitin carboxyl-terminal hydrolase 22-B (523 aa).

The UBP-type zinc-finger motif lies at Ala4–Leu121. 12 residues coordinate Zn(2+): Cys6, His8, Cys46, Cys49, Cys59, Cys62, Cys67, His72, His76, His82, Cys95, and Cys98. Residues Arg174–Gln518 form the USP domain. Cys183 serves as the catalytic Nucleophile. His477 serves as the catalytic Proton acceptor.

The protein belongs to the peptidase C19 family. UBP8 subfamily. In terms of assembly, component of some SAGA transcription coactivator-HAT complexes.

It is found in the nucleus. It catalyses the reaction Thiol-dependent hydrolysis of ester, thioester, amide, peptide and isopeptide bonds formed by the C-terminal Gly of ubiquitin (a 76-residue protein attached to proteins as an intracellular targeting signal).. Histone deubiquitinating component of the transcription regulatory histone acetylation (HAT) complex SAGA. Catalyzes the deubiquitination of both histones H2A and H2B, thereby acting as a coactivator. Recruited to specific gene promoters by activators, where it is required for transcription. The protein is Ubiquitin carboxyl-terminal hydrolase 22-B (usp22-b) of Xenopus laevis (African clawed frog).